The sequence spans 514 residues: 2-isopropylmalate synthase (514 aa).

Positions 5-268 (LIIFDTTLRD…DVGIDTTQIV (264 aa)) constitute a Pyruvate carboxyltransferase domain. Mn(2+) contacts are provided by D14, H202, H204, and N239. A regulatory domain region spans residues 395-514 (KFVSLSQRSE…KDDKLNPQRA (120 aa)).

The protein belongs to the alpha-IPM synthase/homocitrate synthase family. LeuA type 1 subfamily. In terms of assembly, homodimer. It depends on Mn(2+) as a cofactor.

The protein localises to the cytoplasm. The enzyme catalyses 3-methyl-2-oxobutanoate + acetyl-CoA + H2O = (2S)-2-isopropylmalate + CoA + H(+). Its pathway is amino-acid biosynthesis; L-leucine biosynthesis; L-leucine from 3-methyl-2-oxobutanoate: step 1/4. In terms of biological role, catalyzes the condensation of the acetyl group of acetyl-CoA with 3-methyl-2-oxobutanoate (2-ketoisovalerate) to form 3-carboxy-3-hydroxy-4-methylpentanoate (2-isopropylmalate). The chain is 2-isopropylmalate synthase from Burkholderia cenocepacia (strain HI2424).